Reading from the N-terminus, the 358-residue chain is Phospho-N-acetylmuramoyl-pentapeptide-transferase (358 aa).

The next 10 helical transmembrane spans lie at 3–23, 54–74, 84–104, 114–134, 156–176, 187–207, 231–251, 255–275, 283–303, and 330–350; these read QILF…PALI, GVAI…IGIA, ALLV…DDFI, LTAA…GVLA, ITTV…VVVA, LDGL…IITF, LALV…WNAA, IFMG…LSIT, VVIG…VAVF, and VIIR…GLFY.

Belongs to the glycosyltransferase 4 family. MraY subfamily. It depends on Mg(2+) as a cofactor.

The protein resides in the cell membrane. It catalyses the reaction UDP-N-acetyl-alpha-D-muramoyl-L-alanyl-gamma-D-glutamyl-meso-2,6-diaminopimeloyl-D-alanyl-D-alanine + di-trans,octa-cis-undecaprenyl phosphate = di-trans,octa-cis-undecaprenyl diphospho-N-acetyl-alpha-D-muramoyl-L-alanyl-D-glutamyl-meso-2,6-diaminopimeloyl-D-alanyl-D-alanine + UMP. It functions in the pathway cell wall biogenesis; peptidoglycan biosynthesis. In terms of biological role, catalyzes the initial step of the lipid cycle reactions in the biosynthesis of the cell wall peptidoglycan: transfers peptidoglycan precursor phospho-MurNAc-pentapeptide from UDP-MurNAc-pentapeptide onto the lipid carrier undecaprenyl phosphate, yielding undecaprenyl-pyrophosphoryl-MurNAc-pentapeptide, known as lipid I. The chain is Phospho-N-acetylmuramoyl-pentapeptide-transferase from Nocardia farcinica (strain IFM 10152).